A 393-amino-acid chain; its full sequence is Methylthioribose kinase (393 aa).

Residues asparagine 38, lysine 53, and 107–109 (EDL) each bind ATP. Aspartate 225 contributes to the substrate binding site. 242–244 (DPE) is a binding site for ATP. A substrate-binding site is contributed by arginine 332.

It belongs to the methylthioribose kinase family. Homodimer.

The enzyme catalyses 5-(methylsulfanyl)-D-ribose + ATP = 5-(methylsulfanyl)-alpha-D-ribose 1-phosphate + ADP + H(+). The protein operates within amino-acid biosynthesis; L-methionine biosynthesis via salvage pathway; S-methyl-5-thio-alpha-D-ribose 1-phosphate from S-methyl-5'-thioadenosine (hydrolase route): step 2/2. Catalyzes the phosphorylation of methylthioribose into methylthioribose-1-phosphate. The sequence is that of Methylthioribose kinase from Bacillus cereus (strain B4264).